Consider the following 106-residue polypeptide: NADH-quinone oxidoreductase subunit K (106 aa).

The next 3 helical transmembrane spans lie at 8 to 28 (IGIE…IFGV), 35 to 55 (IIMF…FVAF), and 66 to 86 (VFVF…LAIL).

The protein belongs to the complex I subunit 4L family. NDH-1 is composed of 14 different subunits. Subunits NuoA, H, J, K, L, M, N constitute the membrane sector of the complex.

The protein resides in the cell inner membrane. It carries out the reaction a quinone + NADH + 5 H(+)(in) = a quinol + NAD(+) + 4 H(+)(out). Functionally, NDH-1 shuttles electrons from NADH, via FMN and iron-sulfur (Fe-S) centers, to quinones in the respiratory chain. The immediate electron acceptor for the enzyme in this species is believed to be a menaquinone. Couples the redox reaction to proton translocation (for every two electrons transferred, four hydrogen ions are translocated across the cytoplasmic membrane), and thus conserves the redox energy in a proton gradient. The protein is NADH-quinone oxidoreductase subunit K of Flavobacterium psychrophilum (strain ATCC 49511 / DSM 21280 / CIP 103535 / JIP02/86).